A 619-amino-acid polypeptide reads, in one-letter code: Protein DFG16 (619 aa).

A topological domain (extracellular) is located at residue M1. The helical transmembrane segment at 2–22 (IIRLHFYYLLTLVYHLGLVGA) threads the bilayer. Residues 23–167 (YEKAARKRIQ…KDPFPLGMIM (145 aa)) are Cytoplasmic-facing. The tract at residues 33–54 (PPDLIPGPPGHKLGDERPPHYD) is disordered. Positions 44–54 (KLGDERPPHYD) are enriched in basic and acidic residues. The helical transmembrane segment at 168–188 (ITFASGCICVATWMLFLVVLL) threads the bilayer. Over 189–203 (LPSDNHNRRNKVVHV) the chain is Extracellular. Residues 204–224 (YVLFSAIIRTVFLNETIAVIF) form a helical membrane-spanning segment. Over 225 to 291 (DSQYHDDYQD…IPFKMKKGTH (67 aa)) the chain is Cytoplasmic. The helical transmembrane segment at 292–312 (IIITVGCFLSLADNILFANLL) threads the bilayer. The Extracellular segment spans residues 313–321 (WRKNLVVLK). The chain crosses the membrane as a helical span at residues 322-342 (VFYKLIELLIYTIFISIICYF). Residues 343-378 (TWHNFAYILLPKTAEINTDGKCKTKLRILWENYHET) are Cytoplasmic-facing. The helical transmembrane segment at 379–399 (IPLLAYNILIFILFYFTTIFF) threads the bilayer. At 400 to 410 (AAFTKHVRGWT) the chain is on the extracellular side. Residues 411-431 (FNFVHLLKVLITVNVWGLIGV) form a helical membrane-spanning segment. Over 432–619 (LEKRELHISK…NHIYNYENSD (188 aa)) the chain is Cytoplasmic. Polar residues-rich tracts occupy residues 485–504 (KSNT…SPTW) and 526–549 (KFGQ…TLSK). 2 disordered regions span residues 485 to 506 (KSNT…TWKS) and 520 to 586 (IMKS…ADKH). A compositionally biased stretch (basic residues) spans 552–561 (QLLRKPRRKT).

It localises to the membrane. Involved in invasion during filamentous growth. The chain is Protein DFG16 (DFG16) from Saccharomyces cerevisiae (strain ATCC 204508 / S288c) (Baker's yeast).